The following is a 152-amino-acid chain: UPF0225 protein YchJ (152 aa).

It belongs to the UPF0225 family.

This Escherichia coli O139:H28 (strain E24377A / ETEC) protein is UPF0225 protein YchJ.